The primary structure comprises 907 residues: Protein translocase subunit SecA (907 aa).

Residues Gln87, 105–109, and Asp513 contribute to the ATP site; that span reads GEGKT. Over residues 841–853 the composition is skewed to basic and acidic residues; sequence EAQRRAQAEEAAR. A disordered region spans residues 841 to 907; sequence EAQRRAQAEE…KYKQCHGQIN (67 aa). The span at 854–865 shows a compositional bias: low complexity; sequence RAQAQHASAQSQ. Over residues 872–887 the composition is skewed to basic and acidic residues; it reads EGHHQPVVRDERKVGR. Zn(2+) contacts are provided by Cys891, Cys893, Cys902, and His903.

It belongs to the SecA family. In terms of assembly, monomer and homodimer. Part of the essential Sec protein translocation apparatus which comprises SecA, SecYEG and auxiliary proteins SecDF-YajC and YidC. It depends on Zn(2+) as a cofactor.

Its subcellular location is the cell inner membrane. The protein localises to the cytoplasm. The enzyme catalyses ATP + H2O + cellular proteinSide 1 = ADP + phosphate + cellular proteinSide 2.. Functionally, part of the Sec protein translocase complex. Interacts with the SecYEG preprotein conducting channel. Has a central role in coupling the hydrolysis of ATP to the transfer of proteins into and across the cell membrane, serving both as a receptor for the preprotein-SecB complex and as an ATP-driven molecular motor driving the stepwise translocation of polypeptide chains across the membrane. The sequence is that of Protein translocase subunit SecA from Vibrio vulnificus (strain YJ016).